Consider the following 253-residue polypeptide: MTHGAVAPIQPWLVCLHGLFGSGEDWSPVLPFFRDWPMLLVDLPGHGASRAITTADFAEVSRQLTATLLEQGIERYWLLGYSLGGRIAMYHACEGHHDGMLGLLVEGGHPGLATPEQRTERIHHDARWAQRFRQDPLPEALQDWYQQAVFADIDSVQREQLIARRSANHGASVAAMLEATSLGRQPFLAARLQHLSIPFIYLCGASDVKFQTLAAQYGLPLLSVALAGHNAHQANPAAYAERVRTFLSHPVKD.

One can recognise an AB hydrolase-1 domain in the interval 11–147; the sequence is PWLVCLHGLF…PEALQDWYQQ (137 aa).

The protein belongs to the AB hydrolase superfamily. MenH family. As to quaternary structure, monomer.

The enzyme catalyses 5-enolpyruvoyl-6-hydroxy-2-succinyl-cyclohex-3-ene-1-carboxylate = (1R,6R)-6-hydroxy-2-succinyl-cyclohexa-2,4-diene-1-carboxylate + pyruvate. It participates in quinol/quinone metabolism; 1,4-dihydroxy-2-naphthoate biosynthesis; 1,4-dihydroxy-2-naphthoate from chorismate: step 3/7. It functions in the pathway quinol/quinone metabolism; menaquinone biosynthesis. In terms of biological role, catalyzes a proton abstraction reaction that results in 2,5-elimination of pyruvate from 2-succinyl-5-enolpyruvyl-6-hydroxy-3-cyclohexene-1-carboxylate (SEPHCHC) and the formation of 2-succinyl-6-hydroxy-2,4-cyclohexadiene-1-carboxylate (SHCHC). In Pectobacterium atrosepticum (strain SCRI 1043 / ATCC BAA-672) (Erwinia carotovora subsp. atroseptica), this protein is 2-succinyl-6-hydroxy-2,4-cyclohexadiene-1-carboxylate synthase.